A 424-amino-acid polypeptide reads, in one-letter code: 5,5'-dehydrodivanillate O-demethylase oxygenase subunit (424 aa).

A Rieske domain is found at Trp-27 to Ala-135. [2Fe-2S] cluster is bound by residues Cys-68, His-70, Cys-87, and His-90. His-181, His-186, and Asp-306 together coordinate Fe cation.

Belongs to the bacterial ring-hydroxylating dioxygenase alpha subunit family. Homotrimer. The three-component monooxygenase is composed of an oxygenase (LigXa), a ferredoxin (LigXc) and a ferredoxin reductase (LigXd). [2Fe-2S] cluster is required as a cofactor. Requires Fe cation as cofactor.

The enzyme catalyses 5,5'-dehydrodivanillate + NADH + O2 + H(+) = 2,2',3-trihydroxy-3'-methoxy-5,5'-dicarboxybiphenyl + formaldehyde + NAD(+) + H2O. Involved in the catabolism of 5,5'-dehydrodivanillate (DDVA), an intermediate in the biodegradation of lignin. Part of a three-component monooxygenase that catalyzes the O-demethylation of DDVA, leading to the formation of 2,2',3-trihydroxy-3'-methoxy-5,5'-dicarboxybiphenyl (OH-DDVA). This is 5,5'-dehydrodivanillate O-demethylase oxygenase subunit from Sphingobium sp. (strain NBRC 103272 / SYK-6).